Consider the following 456-residue polypeptide: Chromosomal replication initiator protein DnaA 1 (456 aa).

The interval M1–K68 is domain I, interacts with DnaA modulators. The domain II stretch occupies residues K68–G101. The interval D102–V320 is domain III, AAA+ region. 4 residues coordinate ATP: S150, G152, K153, and T154. The segment at A321 to D456 is domain IV, binds dsDNA.

The protein belongs to the DnaA family. In terms of assembly, oligomerizes as a right-handed, spiral filament on DNA at oriC.

Its subcellular location is the cytoplasm. In terms of biological role, plays an essential role in the initiation and regulation of chromosomal replication. ATP-DnaA binds to the origin of replication (oriC) to initiate formation of the DNA replication initiation complex once per cell cycle. Binds the DnaA box (a 9 base pair repeat at the origin) and separates the double-stranded (ds)DNA. Forms a right-handed helical filament on oriC DNA; dsDNA binds to the exterior of the filament while single-stranded (ss)DNA is stabiized in the filament's interior. The ATP-DnaA-oriC complex binds and stabilizes one strand of the AT-rich DNA unwinding element (DUE), permitting loading of DNA polymerase. After initiation quickly degrades to an ADP-DnaA complex that is not apt for DNA replication. Binds acidic phospholipids. The sequence is that of Chromosomal replication initiator protein DnaA 1 from Chlamydia trachomatis serovar D (strain ATCC VR-885 / DSM 19411 / UW-3/Cx).